The sequence spans 705 residues: Phosphatidylinositol 4-phosphate 5-kinase 3 (705 aa).

MORN repeat units follow at residues 58 to 80 (YNGG…DGCM), 81 to 103 (YEGE…SGAT), 104 to 126 (YEGQ…DGDT), 127 to 149 (YRGH…NGDG), 150 to 172 (YQGN…DGNE), 173 to 195 (YVGE…NGNR), and 196 to 218 (YDGL…EEKT). Residues 321–701 (TVTAGHKNYD…RFRDFINKIF (381 aa)) form the PIPK domain. Positions 661–682 (YDITKKLEHAYKSLHADPASIS) are activation loop.

Its subcellular location is the cell membrane. The catalysed reaction is a 1,2-diacyl-sn-glycero-3-phospho-(1D-myo-inositol 4-phosphate) + ATP = a 1,2-diacyl-sn-glycero-3-phospho-(1D-myo-inositol-4,5-bisphosphate) + ADP + H(+). Functionally, with DRP1A and DRP2B, required for the precise coordination of polar ARAC3/ROP6 and ARAC4/ROP2 placement and subsequent root hair positioning during planar polarity formation in root hair-forming cells, probably by mediating the correct basal-to-planar polarity switching of D6PK into the polar, lipid-enriched domain. This chain is Phosphatidylinositol 4-phosphate 5-kinase 3, found in Arabidopsis thaliana (Mouse-ear cress).